The sequence spans 303 residues: Growth/differentiation factor 15 (303 aa).

The first 30 residues, 1 to 30 (MAPPALQAQPPGGSQLRFLLFLLLLLLLLS), serve as a signal peptide directing secretion. Positions 31-188 (WPSQGDALAM…LRVAAGRGRR (158 aa)) are excised as a propeptide. An N-linked (GlcNAc...) asparagine glycan is attached at N71. Intrachain disulfides connect C198–C205, C206–C269, C235–C300, and C239–C302.

The protein belongs to the TGF-beta family. In terms of assembly, homodimer; disulfide-linked. Interacts with GFRAL and RET; ligand of GFRAL, which mediates GDF15 internalization and cellular signaling through interaction with RET via the formation of a 2:2:2 ternary complex composed of GDF15, GFRAL and RET. As to expression, detected in plasma (at protein level). Highly expressed in liver. Expressed in the distal small intestine, colon and kidney. Expressed in skeletal muscle in response to mitochondrial stress. Expressed by cardiomyocytes, expression is highly increased in heart diseases. Also detected in subcutaneous fat.

The protein resides in the secreted. In terms of biological role, hormone produced in response to various stresses to confer information about those stresses to the brain, and trigger an aversive response, characterized by nausea and/or loss of appetite. The aversive response is both required to reduce continuing exposure to those stresses at the time of exposure and to promote avoidance behavior in the future. Acts by binding to its receptor, GFRAL, activating GFRAL-expressing neurons localized in the area postrema and nucleus tractus solitarius of the brainstem. It then triggers the activation of neurons localized within the parabrachial nucleus and central amygdala, which constitutes part of the 'emergency circuit' that shapes responses to stressful conditions. The GDF15-GFRAL signal induces expression of genes involved in metabolism, such as lipid metabolism in adipose tissues. Required for avoidance behavior in response to food allergens: induced downstream of mast cell activation to promote aversion and minimize harmful effects of exposure to noxious substances. In addition to suppress appetite, also promotes weight loss by enhancing energy expenditure in muscle: acts by increasing calcium futile cycling in muscle. Contributes to the effect of metformin, an anti-diabetic drug, on appetite reduction and weight loss: produced in the kidney in response to metformin treatment, thereby activating the GDF15-GFRAL response, leading to reduced appetite and weight. Produced in response to anticancer drugs, such as camptothecin or cisplatin, promoting nausea and contributing to malnutrition. Overproduced in many cancers, promoting anorexia in cancer (cachexia). Responsible for the risk of nausea during pregnancy: high levels of GDF15 during pregnancy, mostly originating from embryos, are associated with increased nausea. Maternal sensitivity to nausea is probably determined by pre-pregnancy exposure to GDF15, females with naturally high level of GDF15 being less susceptible to nausea than female mice with low levels of GDF15 before pregnancy. Promotes metabolic adaptation in response to systemic inflammation caused by bacterial and viral infections in order to promote tissue tolerance and prevent tissue damage. Required for tissue tolerance in response to myocardial infarction by acting as an inhibitor of leukocyte integring activation, thereby protecting against cardiac rupture. Inhibits growth hormone signaling on hepatocytes. In Mus musculus (Mouse), this protein is Growth/differentiation factor 15.